A 455-amino-acid polypeptide reads, in one-letter code: Bifunctional protein GlmU (455 aa).

Positions 1–230 (MANRFAVILA…FDETIGINDR (230 aa)) are pyrophosphorylase. Residues 9-12 (LAAG), Lys23, Gln73, and 78-79 (GT) each bind UDP-N-acetyl-alpha-D-glucosamine. Asp103 serves as a coordination point for Mg(2+). Positions 140, 155, 170, and 228 each coordinate UDP-N-acetyl-alpha-D-glucosamine. Residue Asn228 coordinates Mg(2+). The interval 231–251 (IALAEAEKIMKKRINEQHMRN) is linker. The segment at 252 to 455 (GVSIIDPEQT…KEEYASKFKK (204 aa)) is N-acetyltransferase. Arg333 and Lys351 together coordinate UDP-N-acetyl-alpha-D-glucosamine. The Proton acceptor role is filled by His363. The UDP-N-acetyl-alpha-D-glucosamine site is built by Tyr366 and Asn377. Acetyl-CoA contacts are provided by residues 386 to 387 (NY), Ala423, and Arg440.

The protein in the N-terminal section; belongs to the N-acetylglucosamine-1-phosphate uridyltransferase family. It in the C-terminal section; belongs to the transferase hexapeptide repeat family. Homotrimer. The cofactor is Mg(2+).

Its subcellular location is the cytoplasm. The catalysed reaction is alpha-D-glucosamine 1-phosphate + acetyl-CoA = N-acetyl-alpha-D-glucosamine 1-phosphate + CoA + H(+). It carries out the reaction N-acetyl-alpha-D-glucosamine 1-phosphate + UTP + H(+) = UDP-N-acetyl-alpha-D-glucosamine + diphosphate. The protein operates within nucleotide-sugar biosynthesis; UDP-N-acetyl-alpha-D-glucosamine biosynthesis; N-acetyl-alpha-D-glucosamine 1-phosphate from alpha-D-glucosamine 6-phosphate (route II): step 2/2. Its pathway is nucleotide-sugar biosynthesis; UDP-N-acetyl-alpha-D-glucosamine biosynthesis; UDP-N-acetyl-alpha-D-glucosamine from N-acetyl-alpha-D-glucosamine 1-phosphate: step 1/1. It participates in bacterial outer membrane biogenesis; LPS lipid A biosynthesis. In terms of biological role, catalyzes the last two sequential reactions in the de novo biosynthetic pathway for UDP-N-acetylglucosamine (UDP-GlcNAc). The C-terminal domain catalyzes the transfer of acetyl group from acetyl coenzyme A to glucosamine-1-phosphate (GlcN-1-P) to produce N-acetylglucosamine-1-phosphate (GlcNAc-1-P), which is converted into UDP-GlcNAc by the transfer of uridine 5-monophosphate (from uridine 5-triphosphate), a reaction catalyzed by the N-terminal domain. The sequence is that of Bifunctional protein GlmU from Oceanobacillus iheyensis (strain DSM 14371 / CIP 107618 / JCM 11309 / KCTC 3954 / HTE831).